Reading from the N-terminus, the 473-residue chain is Myocyte-specific enhancer factor 2C (473 aa).

Residues 1–61 form the MADS-box domain; it reads MGRKKIQITR…NKLFQYASTD (61 aa). Position 4 is an N6-acetyllysine (lysine 4). Residues 58-86 constitute a DNA-binding region (mef2-type); that stretch reads ASTDMDKVLLKYTEYNEPHESRTNSDIVE. Serine 59 carries the phosphoserine; by CK2 modification. A disordered region spans residues 91 to 116; that stretch reads KGLNGCDSPDPDADDSVGHSPESEDK. Phosphoserine occurs at positions 98, 106, and 110. N6-acetyllysine occurs at positions 116 and 119. Residues 180-206 form a disordered region; sequence NSMSPGVTHRPPSAGNTGGLMGGDLTS. Phosphoserine occurs at positions 222 and 228. An N6-acetyllysine mark is found at lysine 234 and lysine 239. Serine 240 is subject to Phosphoserine. An N6-acetyllysine mark is found at lysine 252 and lysine 264. The interval 271–278 is beta domain; the sequence is SEDVDLLL. Threonine 293 and threonine 300 each carry phosphothreonine; by MAPK14. A transcription repressor region spans residues 368–399; sequence ACTSTHLSQSSNLSLPSTQSLNIKSEPVSPPR. Residues 375 to 390 show a composition bias toward polar residues; that stretch reads SQSSNLSLPSTQSLNI. The interval 375-473 is disordered; it reads SQSSNLSLPS…RMRLSEGWAT (99 aa). A Glycyl lysine isopeptide (Lys-Gly) (interchain with G-Cter in SUMO) cross-link involves residue lysine 391. Serine 396 bears the Phosphoserine; by CDK5 mark. The residue at position 419 (serine 419) is a Phosphoserine; by MAPK7. The segment covering 419–432 has biased composition (low complexity); the sequence is SPVDSLSSCSSSYD. The span at 433-443 shows a compositional bias: basic and acidic residues; it reads GSDREDHRNEF. Serine 445 is subject to Phosphoserine.

This sequence belongs to the MEF2 family. As to quaternary structure, forms a complex with class II HDACs in undifferentiating cells. On myogenic differentiation, HDACs are released into the cytoplasm allowing MEF2s to interact with other proteins for activation. Interacts with EP300 in differentiating cells; the interaction acetylates MEF2C leading to increased DNA binding and activation. Interacts with HDAC7 and CARM1. Interacts with HDAC4 and HDAC9; the interaction with HDACs represses transcriptional activity. Interacts with LPIN1. Interacts with MYOCD. Interacts with AKAP13. Interacts with FOXK1; the interaction inhibits MEF2C transactivation activity. Interacts (via N-terminus) with HABP4; this interaction decreases DNA-binding activity of MEF2C in myocardial cells in response to mechanical stress. Interacts with JPH2; interaction specifically takes place with the Junctophilin-2 N-terminal fragment cleavage product of JPH2. Interacts (via MADS box) with SOX18. Interacts with PHF7; the interaction promotes MEF2C binding to its transcription targets. In terms of processing, phosphorylated on Ser-59; which enhances DNA binding activity. Phosphorylated on Ser-396; which is required for Lys-391 sumoylation and inhibits transcriptional activity. Post-translationally, acetylated by p300 on several sites in diffentiating myocytes. Acetylation on Lys-4 increases DNA binding and transactivation. Sumoylated on Lys-391 with SUMO2 but not SUMO1; which represses transcriptional activity. In terms of processing, proteolytically cleaved in cerebellar granule neurons on several sites by caspase 3 and caspase 7 following neurotoxicity. Preferentially cleaves the CDK5-mediated hyperphosphorylated form which leads to neuron apoptosis and transcriptional inactivation. In terms of tissue distribution, expressed in the heart. Expressed in cardiac myocytes (at protein level).

It is found in the nucleus. The protein resides in the cytoplasm. The protein localises to the sarcoplasm. Functionally, transcription activator which binds specifically to the MEF2 element present in the regulatory regions of many muscle-specific genes. Controls cardiac morphogenesis and myogenesis, and is also involved in vascular development. Enhances transcriptional activation mediated by SOX18. Plays an essential role in hippocampal-dependent learning and memory by suppressing the number of excitatory synapses and thus regulating basal and evoked synaptic transmission. Crucial for normal neuronal development, distribution, and electrical activity in the neocortex. Necessary for proper development of megakaryocytes and platelets and for bone marrow B-lymphopoiesis. Required for B-cell survival and proliferation in response to BCR stimulation, efficient IgG1 antibody responses to T-cell-dependent antigens and for normal induction of germinal center B-cells. May also be involved in neurogenesis and in the development of cortical architecture. In Rattus norvegicus (Rat), this protein is Myocyte-specific enhancer factor 2C.